The following is a 137-amino-acid chain: UPF0768 protein C1952.04c (137 aa).

The segment covering 79-93 (QRRRREDLPTPERPE) has biased composition (basic and acidic residues). Residues 79-137 (QRRRREDLPTPERPEASAQQHAFFPGSSSQQTDIPNVRPQPHIPPPRKSDEAPPPYSYK) form a disordered region. Over residues 119–137 (PHIPPPRKSDEAPPPYSYK) the composition is skewed to pro residues.

The protein belongs to the UPF0768 family.

This Schizosaccharomyces pombe (strain 972 / ATCC 24843) (Fission yeast) protein is UPF0768 protein C1952.04c.